The chain runs to 39 residues: Cytochrome b6-f complex subunit 5 (39 aa).

A helical transmembrane segment spans residues 5–25 (LLSGIVLGLVPVTILGLFVTA).

This sequence belongs to the PetG family. In terms of assembly, the 4 large subunits of the cytochrome b6-f complex are cytochrome b6, subunit IV (17 kDa polypeptide, PetD), cytochrome f and the Rieske protein, while the 4 small subunits are PetG, PetL, PetM and PetN. The complex functions as a dimer.

It is found in the plastid. Its subcellular location is the chloroplast thylakoid membrane. In terms of biological role, component of the cytochrome b6-f complex, which mediates electron transfer between photosystem II (PSII) and photosystem I (PSI), cyclic electron flow around PSI, and state transitions. PetG is required for either the stability or assembly of the cytochrome b6-f complex. This is Cytochrome b6-f complex subunit 5 from Pleurastrum terricola (Filamentous green alga).